A 323-amino-acid chain; its full sequence is tRNA U34 carboxymethyltransferase (323 aa).

Carboxy-S-adenosyl-L-methionine-binding positions include Lys-91, Trp-105, Lys-110, Gly-130, 152 to 154, 181 to 182, Met-196, Tyr-200, and Arg-315; these read DPS and IE.

Belongs to the class I-like SAM-binding methyltransferase superfamily. CmoB family. As to quaternary structure, homotetramer.

It catalyses the reaction carboxy-S-adenosyl-L-methionine + 5-hydroxyuridine(34) in tRNA = 5-carboxymethoxyuridine(34) in tRNA + S-adenosyl-L-homocysteine + H(+). Catalyzes carboxymethyl transfer from carboxy-S-adenosyl-L-methionine (Cx-SAM) to 5-hydroxyuridine (ho5U) to form 5-carboxymethoxyuridine (cmo5U) at position 34 in tRNAs. This chain is tRNA U34 carboxymethyltransferase, found in Vibrio cholerae serotype O1 (strain ATCC 39541 / Classical Ogawa 395 / O395).